Reading from the N-terminus, the 98-residue chain is Complement inhibitor RaCI2 (98 aa).

The first 21 residues, 1–21, serve as a signal peptide directing secretion; the sequence is MNAVTVLAFTAFALIVHDCYS. 3 disulfides stabilise this stretch: C35-C59, C40-C61, and C55-C76.

Belongs to the RaCI family. As to expression, expressed in salivary glands.

It localises to the secreted. Its function is as follows. Complement inhibitor. Prevents complement-mediated C5 activation by binding to C5. Binds C5 at a different binding site than the other tick complement inhibitors OmCI and CirpT1, and the drug eculizumab. This Rhipicephalus microplus (Cattle tick) protein is Complement inhibitor RaCI2.